The following is a 173-amino-acid chain: 2-C-methyl-D-erythritol 2,4-cyclodiphosphate synthase (173 aa).

Residues D17 and H19 each contribute to the a divalent metal cation site. 4-CDP-2-C-methyl-D-erythritol 2-phosphate-binding positions include 17-19 (DVH) and 49-50 (HS). H57 lines the a divalent metal cation pocket. Residues 76-80 (FPNTD), 147-150 (TTTE), and R157 each bind 4-CDP-2-C-methyl-D-erythritol 2-phosphate.

This sequence belongs to the IspF family. In terms of assembly, homotrimer. A divalent metal cation serves as cofactor.

It catalyses the reaction 4-CDP-2-C-methyl-D-erythritol 2-phosphate = 2-C-methyl-D-erythritol 2,4-cyclic diphosphate + CMP. Its pathway is isoprenoid biosynthesis; isopentenyl diphosphate biosynthesis via DXP pathway; isopentenyl diphosphate from 1-deoxy-D-xylulose 5-phosphate: step 4/6. Functionally, involved in the biosynthesis of isopentenyl diphosphate (IPP) and dimethylallyl diphosphate (DMAPP), two major building blocks of isoprenoid compounds. Catalyzes the conversion of 4-diphosphocytidyl-2-C-methyl-D-erythritol 2-phosphate (CDP-ME2P) to 2-C-methyl-D-erythritol 2,4-cyclodiphosphate (ME-CPP) with a corresponding release of cytidine 5-monophosphate (CMP). The protein is 2-C-methyl-D-erythritol 2,4-cyclodiphosphate synthase of Ehrlichia ruminantium (strain Gardel).